Reading from the N-terminus, the 280-residue chain is Probable aquaporin PIP2-8 (280 aa).

Positions 1 to 21 are disordered; that stretch reads MAAGSGSGSNPKDYQDPPPAP. Transmembrane regions (helical) follow at residues 36–56 and 70–92; these read AAIA…STVI and LGIA…GISG. Residues 96–98 carry the NPA 1 motif; it reads NPA. 3 helical membrane-spanning segments follow: residues 113–135, 156–176, and 192–212; these read RAAL…ARAM, SAGA…YTVF, and VLAP…TIPI. Positions 218–220 match the NPA 2 motif; the sequence is NPA. The chain crosses the membrane as a helical span at residues 236 to 256; it reads AWSHLWIFWVGPFAGAAAAMI.

The protein belongs to the MIP/aquaporin (TC 1.A.8) family. PIP (TC 1.A.8.11) subfamily. As to expression, expressed in leaves and at lower levels in roots.

Its subcellular location is the cell membrane. In terms of biological role, aquaporins facilitate the transport of water and small neutral solutes across cell membranes. This is Probable aquaporin PIP2-8 (PIP2-8) from Oryza sativa subsp. japonica (Rice).